Consider the following 1221-residue polypeptide: A disintegrin and metalloproteinase with thrombospondin motifs 18 (1221 aa).

The signal sequence occupies residues 1 to 47; that stretch reads MECALLLACAFPAAGSGPPRGLAGLGRVAKALQLCCLCCASVAAALA. Residues 48–284 constitute a propeptide that is removed on maturation; that stretch reads SDSSSGASGL…EYGSSGRPRR (237 aa). Residues Asn151 and Asn190 are each glycosylated (N-linked (GlcNAc...) asparagine). The Cysteine switch motif lies at 252-259; the sequence is HFCGRRKK. Zn(2+) is bound at residue Cys254. Positions 258–291 are disordered; sequence KKYAPKPPTEDTYLRFDEYGSSGRPRRSAGKSQK. Residues 265–275 show a composition bias toward basic and acidic residues; the sequence is PTEDTYLRFDE. Positions 293–498 constitute a Peptidase M12B domain; that stretch reads LNVETLVVAD…PQAGCLVDEP (206 aa). An N-linked (GlcNAc...) asparagine glycan is attached at Asn313. 11 disulfide bridges follow: Cys369–Cys420, Cys395–Cys402, Cys414–Cys493, Cys453–Cys477, Cys521–Cys546, Cys532–Cys553, Cys541–Cys572, Cys566–Cys577, Cys601–Cys638, Cys605–Cys643, and Cys616–Cys628. Zn(2+) is bound at residue His436. Residue Glu437 is part of the active site. 2 residues coordinate Zn(2+): His440 and His446. Residues 498–577 enclose the Disintegrin domain; it reads PKQAGQYKYP…LSMWCRQGQC (80 aa). Residues 589-644 enclose the TSP type-1 1 domain; that stretch reads HGQWSAWSKWSECSRTCGGGVKFQERHCNNPKPQYGGLFCPGSSRIYQLCNINPCN. N-linked (GlcNAc...) asparagine glycosylation is found at Asn745, Asn838, and Asn909. The segment at 750 to 876 is spacer; it reads FYKGLYLNQH…TPPATKRPAY (127 aa). TSP type-1 domains are found at residues 931–990, 991–1049, 1052–1116, and 1123–1178; these read CPAY…NSHA, CPPQ…GRCP, SRLQ…RACP, and MVAG…NFCP. The PLAC domain occupies 1184–1221; the sequence is EDPSCVDFFNWCHLVPQHGVCNHKFYGKQCCKSCTRKI.

The cofactor is Zn(2+). In terms of processing, the precursor is cleaved by a furin endopeptidase. Post-translationally, glycosylated. Can be O-fucosylated by POFUT2 on a serine or a threonine residue found within the consensus sequence C1-X(2)-(S/T)-C2-G of the TSP type-1 repeat domains where C1 and C2 are the first and second cysteine residue of the repeat, respectively. Fucosylated repeats can then be further glycosylated by the addition of a beta-1,3-glucose residue by the glucosyltransferase, B3GALTL. Fucosylation mediates the efficient secretion of ADAMTS family members. Can also be C-glycosylated with one or two mannose molecules on tryptophan residues within the consensus sequence W-X-X-W of the TPRs, and N-glycosylated. These other glycosylations can also facilitate secretion. Expressed in fetal lung, liver, and kidney and in adult brain, prostate, submaxillary gland, and endothelium.

Its subcellular location is the secreted. The protein localises to the extracellular space. It is found in the extracellular matrix. This chain is A disintegrin and metalloproteinase with thrombospondin motifs 18 (ADAMTS18), found in Homo sapiens (Human).